The chain runs to 309 residues: MSYNGSYHQNHHSTLQVKSKFDSEWRRFSIPMHSASGVSYDGFRSLVEKLHHLESVQFTLCYNSTGGDLLPITNDDNLRKSFESARPLLRLLIQRRGESWEEKYGYGTDSDKRWKGISSLMAQKPPKRSYSISNPEDFRQVSAIIDVDIVPEAHRRVRLCKHGQERPLGFYIRDGTSVRVTERGVVKVSGIFISRLVDGGLAESTGLLGVNDEVLEVNGIEVLGKTLDQVTDMMVANAHNLIITVKPANQRNTLSRGPSQQGTPNASEMSAATAAATGGIQRPMKMNGSSDGSYHPKQHDANDSDSGED.

The region spanning 14 to 96 (TLQVKSKFDS…PLLRLLIQRR (83 aa)) is the PB1 domain. One can recognise a Pseudo-CRIB domain in the interval 132 to 149 (ISNPEDFRQVSAIIDVDI). The 94-residue stretch at 156-249 (RVRLCKHGQE…NLIITVKPAN (94 aa)) folds into the PDZ domain. The span at 249-270 (NQRNTLSRGPSQQGTPNASEMS) shows a compositional bias: polar residues. A disordered region spans residues 249–309 (NQRNTLSRGP…DANDSDSGED (61 aa)).

The protein belongs to the PAR6 family. Interacts with par-3, required for its peripheral localization, and with cdc-42, required for the activation of a par-3/par-6/pkc-3 complex. As to expression, colocalized with par-3 at all stages in early embryos, at the anterior cortex of the embryo. Patchy expression observed at the periphery after completion of meiosis I and in meiosis II, which on completion of metaphase II, is restricted to the anterior 85% of embryo length; this decreases to 55% in embryos between prophase and telophase of the first mitosis. During the first cleavage, expression is detected in the advancing furrow. Along with pkc-3, is unable to associate with the apical cortex of cells that lack par-3. Transiently coexpressed and colocalized with par-3 and pkc-3, asymmetrically in the developing somatic gonad, including the spermathecal precursor cells of L4 larvae.

Its subcellular location is the cytoplasm. The protein localises to the cell membrane. It is found in the cell junction. The protein resides in the tight junction. Necessary for apicobasal and anterior-posterior asymmetries associated with cell adhesion and gastrulation during the first few cell cycles of embryogenesis. Required for localizing/ maintaining par-3 at the cell periphery. Regulates mes-1 expression and/or localization pattern during early embryogenesis. Acts together with par-3 and pkc-3 in maintaining epithelial cell polarity in the distal spermatheca. Plays a role in endosome and Golgi body positioning. This Caenorhabditis elegans protein is Partitioning defective protein 6.